The chain runs to 460 residues: Bifunctional protein GlmU (460 aa).

Positions 1–233 (MLDIVIMAAG…ETEVLGVNSP (233 aa)) are pyrophosphorylase. Residues Lys21, Gln76, and 81-82 (GT) contribute to the UDP-N-acetyl-alpha-D-glucosamine site. Asp105 contributes to the Mg(2+) binding site. 3 residues coordinate UDP-N-acetyl-alpha-D-glucosamine: Gly140, Glu158, and Asn231. A Mg(2+)-binding site is contributed by Asn231. The interval 234 to 254 (LQLADLERRLQRKQAEALLEA) is linker. The interval 255–460 (GVRLADPARF…AGWQRPQKKR (206 aa)) is N-acetyltransferase. 2 residues coordinate UDP-N-acetyl-alpha-D-glucosamine: Arg337 and Lys355. The Proton acceptor role is filled by His367. UDP-N-acetyl-alpha-D-glucosamine-binding residues include Tyr370 and Asn381. Residues Ala384, 390 to 391 (NY), Ser409, Gly427, and Arg444 each bind acetyl-CoA.

The protein in the N-terminal section; belongs to the N-acetylglucosamine-1-phosphate uridyltransferase family. It in the C-terminal section; belongs to the transferase hexapeptide repeat family. In terms of assembly, homotrimer. The cofactor is Mg(2+).

The protein resides in the cytoplasm. It carries out the reaction alpha-D-glucosamine 1-phosphate + acetyl-CoA = N-acetyl-alpha-D-glucosamine 1-phosphate + CoA + H(+). The enzyme catalyses N-acetyl-alpha-D-glucosamine 1-phosphate + UTP + H(+) = UDP-N-acetyl-alpha-D-glucosamine + diphosphate. It participates in nucleotide-sugar biosynthesis; UDP-N-acetyl-alpha-D-glucosamine biosynthesis; N-acetyl-alpha-D-glucosamine 1-phosphate from alpha-D-glucosamine 6-phosphate (route II): step 2/2. The protein operates within nucleotide-sugar biosynthesis; UDP-N-acetyl-alpha-D-glucosamine biosynthesis; UDP-N-acetyl-alpha-D-glucosamine from N-acetyl-alpha-D-glucosamine 1-phosphate: step 1/1. It functions in the pathway bacterial outer membrane biogenesis; LPS lipid A biosynthesis. Catalyzes the last two sequential reactions in the de novo biosynthetic pathway for UDP-N-acetylglucosamine (UDP-GlcNAc). The C-terminal domain catalyzes the transfer of acetyl group from acetyl coenzyme A to glucosamine-1-phosphate (GlcN-1-P) to produce N-acetylglucosamine-1-phosphate (GlcNAc-1-P), which is converted into UDP-GlcNAc by the transfer of uridine 5-monophosphate (from uridine 5-triphosphate), a reaction catalyzed by the N-terminal domain. This is Bifunctional protein GlmU from Methylibium petroleiphilum (strain ATCC BAA-1232 / LMG 22953 / PM1).